The primary structure comprises 153 residues: Endoribonuclease YbeY (153 aa).

Residues H112, H116, and H122 each coordinate Zn(2+).

This sequence belongs to the endoribonuclease YbeY family. Zn(2+) is required as a cofactor.

The protein resides in the cytoplasm. In terms of biological role, single strand-specific metallo-endoribonuclease involved in late-stage 70S ribosome quality control and in maturation of the 3' terminus of the 16S rRNA. This chain is Endoribonuclease YbeY, found in Persephonella marina (strain DSM 14350 / EX-H1).